A 113-amino-acid polypeptide reads, in one-letter code: Tubulin-folding cofactor A (113 aa).

The interval 83 to 113 is disordered; sequence LEETDEKEGPEIEDAKKTVADVEKQFPTEDA. A compositionally biased stretch (basic and acidic residues) spans 89-113; sequence KEGPEIEDAKKTVADVEKQFPTEDA.

It belongs to the TBCA family. In terms of assembly, monomer. Supercomplex made of cofactors A to E. Cofactors A and D function by capturing and stabilizing tubulin in a quasi-native conformation. Cofactor E binds to the cofactor D-tubulin complex; interaction with cofactor C then causes the release of tubulin polypeptides that are committed to the native state. Interacts with TUBB9. As to expression, expressed in leaves, roots, flowers and stems.

In terms of biological role, tubulin-folding protein involved in the control of the alpha-/beta-tubulin monomer balance. Functions as a reservoir of bound and non-toxic beta-tubulin. Required in the developing embryo. This Arabidopsis thaliana (Mouse-ear cress) protein is Tubulin-folding cofactor A (TFCA).